Reading from the N-terminus, the 35-residue chain is uncharacterized protein (35 aa).

Residues 1-25 form the signal peptide; that stretch reads MTERKLLQLLRRPFISLSLFTALRA.

This is an uncharacterized protein from Saccharomyces cerevisiae (strain ATCC 204508 / S288c) (Baker's yeast).